A 624-amino-acid polypeptide reads, in one-letter code: Nif-specific regulatory protein (624 aa).

Residues 29–171 (DLQQTLREVL…MVANLIGQTV (143 aa)) enclose the GAF domain. The region spanning 203–431 (VVCTSPNMLE…LENCIERAAT (229 aa)) is the Sigma-54 factor interaction domain. ATP-binding positions include 231 to 238 (GESGTGKE) and 294 to 303 (ASGGTLFLDE). The tract at residues 432-581 (QSRDGIIRTE…PLDEPESGSL (150 aa)) is inter-domain linker. Residues Cys-445 and Cys-450 each coordinate a divalent metal cation. Disordered regions lie at residues 477 to 508 (VNRV…EPAG) and 549 to 578 (APAA…EPES). A compositionally biased stretch (low complexity) spans 549-563 (APAAAAPAPTSVTNA). The tract at residues 582–624 (RDRLLWAMERTGWVQAKAARLLGMTTRQVSYALRKYNIEIKRF) is C-terminal DNA-binding domain. A DNA-binding region (H-T-H motif) is located at residues 596-615 (QAKAARLLGMTTRQVSYALR).

Interacts with sigma-54.

Functionally, required for activation of most nif operons, which are directly involved in nitrogen fixation. The polypeptide is Nif-specific regulatory protein (nifA) (Azospirillum lipoferum).